The primary structure comprises 263 residues: Endonuclease 8 (263 aa).

Pro2 acts as the Schiff-base intermediate with DNA in catalysis. Glu3 functions as the Proton donor in the catalytic mechanism. The active-site Proton donor; for beta-elimination activity is the Lys53. The DNA site is built by Gln70, Arg125, and Asn169. The segment at 229–263 (KVFHRDGELCERCGGIIEKTTLSSRPFYWCPGCQH) adopts an FPG-type zinc-finger fold. Residue Arg253 is the Proton donor; for delta-elimination activity of the active site.

This sequence belongs to the FPG family. The cofactor is Zn(2+).

It catalyses the reaction 2'-deoxyribonucleotide-(2'-deoxyribose 5'-phosphate)-2'-deoxyribonucleotide-DNA = a 3'-end 2'-deoxyribonucleotide-(2,3-dehydro-2,3-deoxyribose 5'-phosphate)-DNA + a 5'-end 5'-phospho-2'-deoxyribonucleoside-DNA + H(+). Its function is as follows. Involved in base excision repair of DNA damaged by oxidation or by mutagenic agents. Acts as a DNA glycosylase that recognizes and removes damaged bases. Has a preference for oxidized pyrimidines, such as thymine glycol, 5,6-dihydrouracil and 5,6-dihydrothymine. Has AP (apurinic/apyrimidinic) lyase activity and introduces nicks in the DNA strand. Cleaves the DNA backbone by beta-delta elimination to generate a single-strand break at the site of the removed base with both 3'- and 5'-phosphates. This chain is Endonuclease 8, found in Shigella dysenteriae serotype 1 (strain Sd197).